Reading from the N-terminus, the 213-residue chain is Peptidoglycan-N-acetylglucosamine deacetylase BC_3618 (213 aa).

The NodB homology domain occupies 22–203 (KIIAITFDDG…ELKKQGYRFV (182 aa)). Asp-29 functions as the Proton acceptor in the catalytic mechanism. Residues Asp-30, His-80, and His-84 each coordinate Zn(2+). The active-site Proton donor is the His-175.

It belongs to the polysaccharide deacetylase family. It depends on Zn(2+) as a cofactor.

It carries out the reaction peptidoglycan-N-acetyl-D-glucosamine + H2O = peptidoglycan-D-glucosamine + acetate.. Its activity is regulated as follows. Inhibited by CuCl(2) and ZnCl(2). Its function is as follows. Catalyzes the deacetylation of N-acetylglucosamine (GlcNAc) residues in peptidoglycan. Also acts on soluble chitin substrates and N-acetylchitooligomers. Acts on cell wall peptidoglycan from the Gram-positive bacteria B.cereus and B.subtilis and the Gram-negative bacterium H.pylori. Not active on acetylated xylan. This Bacillus cereus (strain ATCC 14579 / DSM 31 / CCUG 7414 / JCM 2152 / NBRC 15305 / NCIMB 9373 / NCTC 2599 / NRRL B-3711) protein is Peptidoglycan-N-acetylglucosamine deacetylase BC_3618.